The sequence spans 85 residues: U4-theraphotoxin-Hhn1d (85 aa).

The N-terminal stretch at 1–22 is a signal peptide; that stretch reads MKVTLIAILTCAAVLVLHTTAA. Residues 23 to 48 constitute a propeptide that is removed on maturation; it reads EELEAESQLMEVGMPDTELAAVDEER. Intrachain disulfides connect Cys52-Cys66, Cys56-Cys77, and Cys71-Cys82.

It belongs to the neurotoxin 12 (Hwtx-2) family. 02 (Hwtx-2) subfamily. Expressed by the venom gland.

Its subcellular location is the secreted. Functionally, postsynaptic neurotoxin. This Cyriopagopus hainanus (Chinese bird spider) protein is U4-theraphotoxin-Hhn1d.